The sequence spans 225 residues: Class E basic helix-loop-helix protein 23 (225 aa).

Residues 35–104 are disordered; that stretch reads EAARGYGTPG…PREQRSLRLS (70 aa). Residues 100–154 enclose the bHLH domain; sequence SLRLSINARERRRMHDLNDALDGLRAVIPYAHSPSVRKLSKIATLLLAKNYILMQ.

Its subcellular location is the nucleus. May function as transcriptional repressor. May modulate the expression of genes required for the differentiation and/or maintenance of pancreatic and neuronal cell types. May be important for rod bipolar cell maturation. The chain is Class E basic helix-loop-helix protein 23 (BHLHE23) from Homo sapiens (Human).